We begin with the raw amino-acid sequence, 710 residues long: Low-temperature-induced 78 kDa protein (710 aa).

Disordered regions lie at residues 1 to 198 (MDQT…LDGQ), 225 to 269 (YQSK…RDLS), and 305 to 507 (GFGD…STYT). Basic and acidic residues predominate over residues 14-25 (QHPEEVEHHENG). Residues 29–41 (MFRKVKARAKKFK) show a composition bias toward basic residues. Positions 49–58 (QSNEHEQDHD) are enriched in basic and acidic residues. Acidic residues predominate over residues 59-73 (LVEEDDDDDELEPEV). Residues 138-168 (SDKEEKRDVPIHHPLSELSDREESRETHHES) are compositionally biased toward basic and acidic residues. A compositionally biased stretch (polar residues) spans 169-187 (LNTPVSLLSGTEDVTSTFA). 5 tandem repeats follow at residues 303–316 (PVGF…ELEK), 317–331 (DFPT…KTET), 336–350 (NSPS…KTES), 357–370 (PMGF…ELEK), and 398–412 (NFPV…KNES). Positions 303 to 370 (PVGFGDESGA…GSESGAELEK (68 aa)) are 2 X 14 AA repeats of P-[MV]-G-F-G-[DS]-E-S-G-A-E-L-E-K. 6 stretches are compositionally biased toward basic and acidic residues: residues 313 to 331 (ELEK…KTET), 340 to 352 (RSHE…ESGN), 367 to 380 (ELEK…DSGR), 402 to 418 (RSHE…DKDV), 442 to 466 (EDKF…KTET), and 475 to 487 (SHPK…KESR). The 3 X 15 AA repeats of [DN]-[FS]-P-[STV]-R-S-H-[DE]-[FL]-D-[LM]-K-[NT]-E-[ST] stretch occupies residues 317 to 412 (DFPTRSHDFD…SHELDLKNES (96 aa)). Tandem repeats lie at residues 510-514 (FASML), 532-536 (VDEKL), and 550-554 (VTTKL). The 5 X 5 AA repeats of [FV]-[ADT]-[EST]-[KM]-L stretch occupies residues 510 to 600 (FASMLGYSGE…AFSDMVAEKL (91 aa)). The segment at 537–577 (TPVNEKDQETESAVTTKLPISGGGSGVEEQRGEDKSVSGRD) is disordered. The span at 564 to 577 (EEQRGEDKSVSGRD) shows a compositional bias: basic and acidic residues. 2 repeat units span residues 579 to 583 (VAEKL) and 596 to 600 (VAEKL). A disordered region spans residues 601–710 (QIGGEEEKKE…STVVPVQKEL (110 aa)). A compositionally biased stretch (basic and acidic residues) spans 605-626 (EEEKKETTTKEVEKISTEKAAS). S626 carries the post-translational modification Phosphoserine. A compositionally biased stretch (gly residues) spans 638 to 654 (GGGGMVGRIKGWFGGGA). 2 tandem repeats follow at residues 648–670 (GWFG…EEAP) and 674–696 (GWFG…EESP). The 2 X 23 AA repeats stretch occupies residues 648–696 (GWFGGGATDEVKPESPHSVEEAPKSSGWFGGGATEEVKPKSPHSVEESP). 2 stretches are compositionally biased toward basic and acidic residues: residues 656–670 (DEVK…EEAP) and 682–693 (EEVKPKSPHSVE).

This sequence belongs to the LTI78/LTI65 family. In terms of tissue distribution, accumulates rapidly in leaves, stems, roots, flower petals, filaments, and sepals during cold-acclimation.

The protein localises to the cytoplasm. Involved in responses to abiotic stresses. Regulates probably root elongation in cold conditions. The sequence is that of Low-temperature-induced 78 kDa protein from Arabidopsis thaliana (Mouse-ear cress).